Consider the following 491-residue polypeptide: MPAPVVMVIGTASSVGKSTLVAALCRLAARRGLRVAPFKAQNMSNNAAVTADGGEIARSTAVQAAAAGIAPTVAMNPILIKPEGQRRSQIIVEGRPWQTLAAGDFWRRKTLLWEVVTRNLDALRATYDLVIAEGAGSPVELNLKAGDIVNMRVAVYAQARTLLVGDIDRGGIFAQLLGTLMLLDPTERQLIQGLIVNRFRGDPALFVDGVRILEERSGIPVLGVVPWIEDLGLAEEDAVAIEQSTPVMAQGITIAVIRLPTIANFDDFDPLAREPGVTVRYIDRPGELAGVAAVIIPGVKHTIAARRWLRERGFDEALRRFPGAIVGICGGYQLLGERISDPLAVEGNGGDEVGLGLLPVETIFVTTKQTTQTVAHARVPWGGQAPLHGYEIHMGRTHRIGAASALLTIIQRGAQAVLEEDGCISPDGRVWGCYLHGLFTNDEFRHGWLRQLGWQPTTSVSGSVDPINRLADHVARALGETVLDRLFRLTE.

A GATase cobBQ-type domain is found at 251 to 444 (GITIAVIRLP…LHGLFTNDEF (194 aa)). Cys329 acts as the Nucleophile in catalysis. His436 is a catalytic residue.

Belongs to the CobB/CobQ family. CobQ subfamily.

It participates in cofactor biosynthesis; adenosylcobalamin biosynthesis. Functionally, catalyzes amidations at positions B, D, E, and G on adenosylcobyrinic A,C-diamide. NH(2) groups are provided by glutamine, and one molecule of ATP is hydrogenolyzed for each amidation. In Chloroflexus aggregans (strain MD-66 / DSM 9485), this protein is Cobyric acid synthase.